The sequence spans 505 residues: Maturase K (505 aa).

Belongs to the intron maturase 2 family. MatK subfamily.

The protein localises to the plastid. It is found in the chloroplast. Its function is as follows. Usually encoded in the trnK tRNA gene intron. Probably assists in splicing its own and other chloroplast group II introns. The polypeptide is Maturase K (Phaulothamnus spinescens (Snake-eyes)).